The sequence spans 361 residues: Histidinol-phosphate aminotransferase (361 aa).

N6-(pyridoxal phosphate)lysine is present on Lys224.

This sequence belongs to the class-II pyridoxal-phosphate-dependent aminotransferase family. Histidinol-phosphate aminotransferase subfamily. As to quaternary structure, homodimer. The cofactor is pyridoxal 5'-phosphate.

It carries out the reaction L-histidinol phosphate + 2-oxoglutarate = 3-(imidazol-4-yl)-2-oxopropyl phosphate + L-glutamate. It functions in the pathway amino-acid biosynthesis; L-histidine biosynthesis; L-histidine from 5-phospho-alpha-D-ribose 1-diphosphate: step 7/9. The chain is Histidinol-phosphate aminotransferase from Limosilactobacillus fermentum (strain NBRC 3956 / LMG 18251) (Lactobacillus fermentum).